Consider the following 78-residue polypeptide: Translation initiation factor IF-1, chloroplastic (78 aa).

In terms of domain architecture, S1-like spans 1 to 72; it reads MEKQNLIDME…TKGRITYRLR (72 aa).

The protein belongs to the IF-1 family. In terms of assembly, component of the 30S ribosomal translation pre-initiation complex which assembles on the 30S ribosome in the order IF-2 and IF-3, IF-1 and N-formylmethionyl-tRNA(fMet); mRNA recruitment can occur at any time during PIC assembly.

It is found in the plastid. Its subcellular location is the chloroplast. In terms of biological role, one of the essential components for the initiation of protein synthesis. Stabilizes the binding of IF-2 and IF-3 on the 30S subunit to which N-formylmethionyl-tRNA(fMet) subsequently binds. Helps modulate mRNA selection, yielding the 30S pre-initiation complex (PIC). Upon addition of the 50S ribosomal subunit IF-1, IF-2 and IF-3 are released leaving the mature 70S translation initiation complex. This is Translation initiation factor IF-1, chloroplastic from Anthoceros angustus (Hornwort).